Consider the following 405-residue polypeptide: Pre-mRNA-splicing factor cwc-24 (405 aa).

Disordered stretches follow at residues 1-114 and 162-184; these read MADT…NTIY and TKKK…DGTY. The segment covering 15–29 has biased composition (low complexity); the sequence is EPTTATPTAPIAPVA. The span at 31–46 shows a compositional bias: basic residues; the sequence is FKKRGAKGKANLRKRP. The span at 56–70 shows a compositional bias: acidic residues; the sequence is SDDDSSDFESSEDEA. Positions 74–83 are enriched in basic residues; the sequence is RIKRRKKNHH. Residues 221–249 form a C3H1-type zinc finger; sequence DMAPDVCKDYKQTGFCGFGDNCKFLHARE. Residues 310 to 349 form an RING-type zinc finger; sequence CIICRGPYSNSPVVTRCGHYFCEACALKRYRKDPSCAACG. Residues 370–386 are compositionally biased toward basic and acidic residues; that stretch reads KARAERLRREARERGEE. Positions 370–405 are disordered; the sequence is KARAERLRREARERGEEVSEEEDEGEDEGEGAEGSD. Positions 387 to 405 are enriched in acidic residues; the sequence is VSEEEDEGEDEGEGAEGSD.

Belongs to the CWC24 family. Associated with the spliceosome.

Its subcellular location is the nucleus. Functionally, involved in pre-mRNA splicing. This is Pre-mRNA-splicing factor cwc-24 (cwc-24) from Neurospora crassa (strain ATCC 24698 / 74-OR23-1A / CBS 708.71 / DSM 1257 / FGSC 987).